The following is a 296-amino-acid chain: ATP synthase gamma chain (296 aa).

Belongs to the ATPase gamma chain family. As to quaternary structure, F-type ATPases have 2 components, CF(1) - the catalytic core - and CF(0) - the membrane proton channel. CF(1) has five subunits: alpha(3), beta(3), gamma(1), delta(1), epsilon(1). CF(0) has three main subunits: a, b and c.

It is found in the cell inner membrane. Produces ATP from ADP in the presence of a proton gradient across the membrane. The gamma chain is believed to be important in regulating ATPase activity and the flow of protons through the CF(0) complex. The polypeptide is ATP synthase gamma chain (Jannaschia sp. (strain CCS1)).